The primary structure comprises 90 residues: Mitochondrial import inner membrane translocase subunit Tim8 A (90 aa).

Positions 36–59 match the Twin CX3C motif motif; it reads CWEKCMDKPGPKLDSRTEVCFVNC. Intrachain disulfides connect Cys-36–Cys-59 and Cys-40–Cys-55.

This sequence belongs to the small Tim family. As to quaternary structure, heterohexamer; composed of 3 copies of TIMM8A and 3 copies of TIMM13, named soluble 70 kDa complex. Associates with the TIM22 complex, whose core is composed of TIMM22.

It localises to the mitochondrion inner membrane. In terms of biological role, mitochondrial intermembrane chaperone that participates in the import and insertion of some multi-pass transmembrane proteins into the mitochondrial inner membrane. Also required for the transfer of beta-barrel precursors from the TOM complex to the sorting and assembly machinery (SAM complex) of the outer membrane. Acts as a chaperone-like protein that protects the hydrophobic precursors from aggregation and guide them through the mitochondrial intermembrane space. The TIMM8-TIMM13 complex mediates the import of some proteins while the predominant TIMM9-TIMM10 70 kDa complex mediates the import of much more proteins. The polypeptide is Mitochondrial import inner membrane translocase subunit Tim8 A (timm8a) (Danio rerio (Zebrafish)).